Reading from the N-terminus, the 228-residue chain is UPF0758 protein stu1465 (228 aa).

In terms of domain architecture, MPN spans 103–225 (QIMSSQQVAR…YYSFREERED (123 aa)). The Zn(2+) site is built by histidine 174, histidine 176, and aspartate 187. A JAMM motif motif is present at residues 174-187 (HNHPSGEAYPSRND).

It belongs to the UPF0758 family.

The polypeptide is UPF0758 protein stu1465 (Streptococcus thermophilus (strain ATCC BAA-250 / LMG 18311)).